A 1073-amino-acid polypeptide reads, in one-letter code: Ubiquitin carboxyl-terminal hydrolase 53 (1073 aa).

The region spanning 30–351 (KGLLNEPGQN…QPLLLFYANP (322 aa)) is the USP domain. The active-site Nucleophile is the Cys41. Zn(2+) is bound by residues His66, Cys68, Cys73, Cys76, His132, Cys144, Cys149, His152, Cys165, Cys168, Cys224, and Cys228. The active-site Proton acceptor is His301. Disordered stretches follow at residues 391–437 (LKEN…HIDQ) and 485–636 (LSHF…PKQK). Polar residues predominate over residues 407–418 (KFPTDNISSSNR). Over residues 524-541 (QSRASAQIISSSKSQILA) the composition is skewed to low complexity. A compositionally biased stretch (polar residues) spans 553 to 563 (DNGTGYDTDSS). The segment covering 612–627 (NISNKPKSSKDPSFSN) has biased composition (low complexity).

This sequence belongs to the peptidase C19 family. In terms of assembly, interacts (via the C-terminal region) with the heterodimer TJP1:TJP2. In terms of tissue distribution, expressed predominantly in skeletal muscle and heart.

It is found in the cell junction. Its subcellular location is the tight junction. It carries out the reaction Thiol-dependent hydrolysis of ester, thioester, amide, peptide and isopeptide bonds formed by the C-terminal Gly of ubiquitin (a 76-residue protein attached to proteins as an intracellular targeting signal).. In terms of biological role, deubiquitinase that mediates 'Lys-63'-linked deubiquitination of tight junction proteins, such as MARVELD2 and LSR, and which is involved in the survival of auditory hair cells and hearing. Specifically cleaves 'Lys-63'-linked polyubiquitin chains composed of at least 3 ubiquitin molecules, while it is not able to deubiquitinate substrates with shorter ubiquitin chains: recognizes ubiquitin chain in position S2 and catalyzes en bloc cleavage of polyubiquitin chains from substrate proteins. Probably acts by modulating the barrier properties and mechanical stability of tight junctions via deubiquitination of MARVELD2 and LSR. The sequence is that of Ubiquitin carboxyl-terminal hydrolase 53 from Homo sapiens (Human).